Here is a 450-residue protein sequence, read N- to C-terminus: Glucose-6-phosphate isomerase (450 aa).

Glutamate 290 acts as the Proton donor in catalysis. Residues histidine 311 and lysine 425 contribute to the active site.

The protein belongs to the GPI family.

The protein resides in the cytoplasm. The enzyme catalyses alpha-D-glucose 6-phosphate = beta-D-fructose 6-phosphate. It functions in the pathway carbohydrate biosynthesis; gluconeogenesis. It participates in carbohydrate degradation; glycolysis; D-glyceraldehyde 3-phosphate and glycerone phosphate from D-glucose: step 2/4. In terms of biological role, catalyzes the reversible isomerization of glucose-6-phosphate to fructose-6-phosphate. This chain is Glucose-6-phosphate isomerase, found in Listeria monocytogenes serovar 1/2a (strain ATCC BAA-679 / EGD-e).